The following is a 148-amino-acid chain: Coactosin (148 aa).

Positions 1 to 134 (MSGFDLSEVA…VEDEIAAKIK (134 aa)) constitute an ADF-H domain. Positions 71-76 (DEESKR) match the F-loop; important for stable binding to G-actin and F-actin motif. At Ser-147 the chain carries Phosphoserine.

Belongs to the actin-binding proteins ADF family. Coactosin subfamily. Interacts with 14-3-3 protein 3. Post-translationally, phosphorylation at Ser-147 appears not to affect its binding to actin; however, it may regulate phagocytosis and motility.

Its subcellular location is the cytoplasm. It localises to the cell projection. The protein resides in the phagocytic cup. It is found in the pseudopodium. The protein localises to the cell membrane. Its subcellular location is the cytoskeleton. Its function is as follows. Actin-binding protein which is involved in F-actin stabilization. May play a role during phagocytosis and pseudopod formation by contributing to the maintenance of F-actin. In Entamoeba histolytica (strain ATCC 30459 / HM-1:IMSS / ABRM), this protein is Coactosin.